The chain runs to 137 residues: Large ribosomal subunit protein uL16 (137 aa).

Belongs to the universal ribosomal protein uL16 family. In terms of assembly, part of the 50S ribosomal subunit.

Binds 23S rRNA and is also seen to make contacts with the A and possibly P site tRNAs. This Anaplasma phagocytophilum (strain HZ) protein is Large ribosomal subunit protein uL16.